We begin with the raw amino-acid sequence, 415 residues long: Transcription termination factor Rho (415 aa).

A Rho RNA-BD domain is found at 52-119 (ADIASGVLDI…TDVVRVNGRT (68 aa)). Residues 161 to 166 (GKGQRG), 173 to 178 (KTGKTV), and Arg-204 contribute to the ATP site.

This sequence belongs to the Rho family. As to quaternary structure, homohexamer. The homohexamer assembles into an open ring structure.

Facilitates transcription termination by a mechanism that involves Rho binding to the nascent RNA, activation of Rho's RNA-dependent ATPase activity, and release of the mRNA from the DNA template. The chain is Transcription termination factor Rho from Streptomyces coelicolor (strain ATCC BAA-471 / A3(2) / M145).